Here is a 249-residue protein sequence, read N- to C-terminus: Coproheme decarboxylase (249 aa).

Y145 is an active-site residue. Residues 145–149 and H172 each bind Fe-coproporphyrin III; that span reads YPMAR.

The protein belongs to the ChdC family. Type 1 subfamily. Fe-coproporphyrin III is required as a cofactor.

It catalyses the reaction Fe-coproporphyrin III + 2 H2O2 + 2 H(+) = heme b + 2 CO2 + 4 H2O. The catalysed reaction is Fe-coproporphyrin III + H2O2 + H(+) = harderoheme III + CO2 + 2 H2O. The enzyme catalyses harderoheme III + H2O2 + H(+) = heme b + CO2 + 2 H2O. The protein operates within porphyrin-containing compound metabolism; protoheme biosynthesis. In terms of biological role, involved in coproporphyrin-dependent heme b biosynthesis. Catalyzes the decarboxylation of Fe-coproporphyrin III (coproheme) to heme b (protoheme IX), the last step of the pathway. The reaction occurs in a stepwise manner with a three-propionate intermediate. The protein is Coproheme decarboxylase of Oceanobacillus iheyensis (strain DSM 14371 / CIP 107618 / JCM 11309 / KCTC 3954 / HTE831).